A 419-amino-acid chain; its full sequence is NF-kappa-B essential modulator (419 aa).

Residues 1-46 (MSRTPWKSQPCEMVQPSGGPAGDQDVLGEESSLGKPTMLHLPSEQG) form a disordered region. A required for interaction with and ubiquitination by MARCHF2 region spans residues 1 to 197 (MSRTPWKSQP…REALQQQHSV (197 aa)). A phosphoserine mark is found at serine 31, serine 43, serine 68, and serine 85. Residues 44–111 (EQGAPETFQR…RLVERLSLEK (68 aa)) are interaction with CHUK/IKBKB. Residues 100–353 (ARRLVERLSL…KTSCQESARI (254 aa)) adopt a coiled-coil conformation. Residues lysine 111, lysine 139, lysine 143, lysine 226, lysine 246, and lysine 264 each participate in a glycyl lysine isopeptide (Lys-Gly) (interchain with G-Cter in ubiquitin) cross-link. Positions 150–257 (LGELQESQSR…SVVSSERNRG (108 aa)) are interaction with TANK. A ubiquitin-binding (UBAN) region spans residues 242–350 (DNHIKSSVVS…SRLKTSCQES (109 aa)). The tract at residues 246 to 365 (KSSVVSSERN…MRKRHVEVSQ (120 aa)) is self-association. Residues 251–419 (SSERNRGLQL…LQIHVMECIE (169 aa)) are required for interaction with TNFAIP3. Lysine 277 is covalently cross-linked (Glycyl lysine isopeptide (Lys-Gly) (interchain with G-Cter in SUMO); alternate). Residue lysine 277 forms a Glycyl lysine isopeptide (Lys-Gly) (interchain with G-Cter in ubiquitin); alternate linkage. Residues lysine 283, lysine 285, lysine 292, and lysine 302 each participate in a glycyl lysine isopeptide (Lys-Gly) (interchain with G-Cter in ubiquitin) cross-link. Lysine 309 participates in a covalent cross-link: Glycyl lysine isopeptide (Lys-Gly) (interchain with G-Cter in SUMO); alternate. Lysine 309 is covalently cross-linked (Glycyl lysine isopeptide (Lys-Gly) (interchain with G-Cter in ubiquitin); alternate). A leucine-zipper region spans residues 322-343 (LAERKELLQEQLEQLQREYSRL). Lysine 326 participates in a covalent cross-link: Glycyl lysine isopeptide (Lys-Gly) (interchain with G-Cter in ubiquitin). Positions 363–394 (VSQPTLPPAPAHHSFHPALPSQRRSPPEEPPN) are disordered. Residues serine 376 and serine 387 each carry the phosphoserine modification. Positions 382–419 (PSQRRSPPEEPPNFCCPKCQYQAPDMDTLQIHVMECIE) are interaction with CYLD. A CCHC NOA-type zinc finger spans residues 389 to 419 (PEEPPNFCCPKCQYQAPDMDTLQIHVMECIE). Cysteine 397 provides a ligand contact to Zn(2+). A Glycyl lysine isopeptide (Lys-Gly) (interchain with G-Cter in ubiquitin) cross-link involves residue lysine 399. The Zn(2+) site is built by cysteine 400, histidine 413, and cysteine 417.

Homodimer; disulfide-linked. Component of the I-kappa-B-kinase (IKK) core complex consisting of CHUK, IKBKB and IKBKG; probably four alpha/CHUK-beta/IKBKB dimers are associated with four gamma/IKBKG subunits. The IKK core complex seems to associate with regulatory or adapter proteins to form a IKK-signalosome holo-complex. The IKK complex associates with TERF2IP/RAP1, leading to promote IKK-mediated phosphorylation of RELA/p65. Part of a complex composed of NCOA2, NCOA3, CHUK/IKKA, IKBKB, IKBKG and CREBBP. Interacts with COPS3, CYLD, NALP2, TRPC4AP and PIDD1. Interacts with ATM; the complex is exported from the nucleus. Interacts with TRAF6. Interacts with IKBKE. Interacts with TANK; the interaction is enhanced by IKBKE and TBK1. Part of a ternary complex consisting of TANK, IKBKB and IKBKG. Interacts with ZFAND5. Interacts with RIPK2. Interacts with TNIP1 and TNFAIP3; TNIP1 facilitates the TNFAIP3-mediated de-ubiquitination of IKBKG. Interacts with TNFAIP3; the interaction is induced by TNF stimulation and by polyubiquitin. Binds (via UBAN region) polyubiquitin; binds both 'Lys-63'-linked and linear polyubiquitin, with higher affinity for linear ubiquitin. Interacts with NLRP10. Interacts with TANK; this interaction increases in response to DNA damage. Interacts with USP10; this interaction increases in response to DNA damage. Interacts with ZC3H12A; this interaction increases in response to DNA damage. Interacts with IFIT5; the interaction synergizes the recruitment of IKK to MAP3K7 and enhances IKK phosphorylation. Interacts with TRIM29; this interaction induces IKBKG/NEMO ubiquitination and proteolytic degradation. Interacts with TRIM13; this interaction leads to IKBKG/NEMO ubiquitination. Interacts with ARFIP2. Interacts with RIPK1. Interacts with (ubiquitinated) BCL10; interaction with polyubiquitinated BCL10 via both 'Lys-63'-linked and linear ubiquitin is required for TCR-induced NF-kappa-B activation. Interacts with MARCHF2; during the late stages of macrophage viral and bacterial infection; the interaction leads to ubiquitination and degradation of IKBKG/NEMO. Post-translationally, phosphorylation at Ser-68 attenuates aminoterminal homodimerization. In terms of processing, polyubiquitinated on Lys-285 via 'Lys-63'-linked ubiquitin; the ubiquitination is mediated downstream of NOD2 and RIPK2 and probably plays a role in signaling by facilitating interactions with ubiquitin domain-containing proteins and activates the NF-kappa-B pathway. Polyubiquitinated on Lys-285 and Lys-399 through 'Lys-63'-linked ubiquitin; the ubiquitination is mediated by BCL10, MALT1 and TRAF6 and probably plays a role in signaling by facilitating interactions with ubiquitin domain-containing proteins and activates the NF-kappa-B pathway. Monoubiquitinated on Lys-277 and Lys-309; promotes nuclear export. Polyubiquitinated through 'Lys-27' by TRIM23; involved in antiviral innate and inflammatory responses. Linear polyubiquitinated on Lys-111, Lys-143, Lys-226, Lys-246, Lys-264, Lys-277, Lys-285, Lys-292, Lys-302, Lys-309 and Lys-326; the head-to-tail polyubiquitination is mediated by the LUBAC complex and plays a key role in NF-kappa-B activation. Deubiquitinated by USP10 in a TANK-dependent and -independent manner, leading to the negative regulation of NF-kappa-B signaling upon DNA damage. Ubiquitinated at Lys-326 by MARCHF2 following bacterial and viral infection which leads to its degradation. Sumoylated on Lys-277 and Lys-309 with SUMO1; the modification results in phosphorylation of Ser-85 by ATM leading to a replacement of the sumoylation by mono-ubiquitination on these residues. Post-translationally, neddylated by TRIM40, resulting in stabilization of NFKBIA and down-regulation of NF-kappa-B activity. In terms of processing, (Microbial infection) Cleaved by porcine reproductive and respiratory syndrome virus serine protease nsp4 after Glu-349. The cleavage inhibits NEMO proper function.

Its subcellular location is the cytoplasm. It is found in the nucleus. Its function is as follows. Regulatory subunit of the IKK core complex which phosphorylates inhibitors of NF-kappa-B thus leading to the dissociation of the inhibitor/NF-kappa-B complex and ultimately the degradation of the inhibitor. Its binding to scaffolding polyubiquitin plays a key role in IKK activation by multiple signaling receptor pathways. Can recognize and bind both 'Lys-63'-linked and linear polyubiquitin upon cell stimulation, with a much highr affinity for linear polyubiquitin. Could be implicated in NF-kappa-B-mediated protection from cytokine toxicity. Essential for viral activation of IRF3. Involved in TLR3- and IFIH1-mediated antiviral innate response; this function requires 'Lys-27'-linked polyubiquitination. This is NF-kappa-B essential modulator (IKBKG) from Sus scrofa (Pig).